A 58-amino-acid chain; its full sequence is Large ribosomal subunit protein uL30 (58 aa).

Belongs to the universal ribosomal protein uL30 family. As to quaternary structure, part of the 50S ribosomal subunit.

In Blochmanniella floridana, this protein is Large ribosomal subunit protein uL30.